The following is a 299-amino-acid chain: Protoheme IX farnesyltransferase (299 aa).

9 helical membrane passes run 26–46, 53–73, 94–114, 121–141, 149–169, 175–195, 217–239, 243–265, and 277–297; these read VNALIVFCAVIGMFLAVPDGL, FAATVGIACVAGAAAAMNCLI, LHSVEVLVFAGVLGGFGLSVL, LTMWLTLATFVGYAVIYTLLL, IVIGGASGAMPPVLGWAAVSG, ALLLFLIIFAWTPPHFWSLAL, YTRLSVLLYTCALFGVTLLPFAI, GWIYLVAAVTLGLRFVHYAWRLL, and FRFSIVYLSLLFAALLADHYL.

Belongs to the UbiA prenyltransferase family. Protoheme IX farnesyltransferase subfamily.

The protein localises to the cell inner membrane. It catalyses the reaction heme b + (2E,6E)-farnesyl diphosphate + H2O = Fe(II)-heme o + diphosphate. It participates in porphyrin-containing compound metabolism; heme O biosynthesis; heme O from protoheme: step 1/1. Its function is as follows. Converts heme B (protoheme IX) to heme O by substitution of the vinyl group on carbon 2 of heme B porphyrin ring with a hydroxyethyl farnesyl side group. This is Protoheme IX farnesyltransferase from Azoarcus sp. (strain BH72).